A 1148-amino-acid polypeptide reads, in one-letter code: MGKRKTKEDNASEDYDANELMIVPGEKRKKLEKSGEKSATGGKKNRNFAKEKEVAKLTKQAKRKLAAVQSRKALKQTQEELFAGLAEFQLDPSKLCQLSSSTKLSKEPEKAPVFPEKLKVFSGKTKTEAKRTQQDYYPTDDESSSEEEEEEEEGDNDIEDAGNTVEVKIEPIDLDDVDEAIDGNPETNLDQIVVKREDDEESDNEDILALPTTTVINRKKVIVERSKEIQKSRAELPIFAEEMRIVEAINENLVTVVCGETGSGKTTQIPQFLYEAGYASEGELIGITEPRRVAAIAMAQRVGVELAKPDEVSYQIRYEGTRSETTNILFMTDGVLMKEMEQDVMLKKYSVILIDEAHERSMYSDVLIGMLSRIVPLRSKTARPLRLVIMSATLRLDDFTHKKLFPLLTPKVIKVDARQFPVSVHFEKRTPDDYIASAFRKTCRIHETLPPGAILVFVTGQHEVKQLITKLKKRYPVVYETDKNGEVLVKGTKEWKEKKVEAAKSIKLEDFKEETPETEDFEDVDDGLMDGDDMNERGAAEAFDDYEEFENGDGDLSDGKVENSIGAPPADCEPLYCLPLYSLLSMGKQRRVFDETPAGMRLCVISTNVAETSLTIPGVKYVIDGGFEKRRLYDSITGVSRFAVCRISQASGDQRAGRAGRISAGHAYRLYSSAVYQDFVKFADPEILSKPADQLVLHLKSMNIVKVVNFPFPSAPDEQMLESAEKRLCRLGALSESTKNGKTEARITKLGKTLAVFPLAPSYAKFIAMADQHNLMSHAILLISLLSVREPLIPVSSLRGDTPEETKELMKNVLKERRRWCSHTGARRLGDLKVLMHAASVAEQIKYNARECEKVGLRVKALVEARKLRQQLTNIVNASCKKEHAAALDSDLPPPTDQQAQLLRQMVVASFSDRLARRVDRSVGQEEVQKGAYETTLIKGHVFIDPCSVVFTEEPEFVIYQELVQVNEKKLMTSVCAVDKEWLSRLAESYCNYGEQDKNQEPIYDPVKDMVVKTVKVTFGPLNWELPNENRSVPHDIMMYRYFALFLLDGLVFEKLKEYTPKLLAPPSTMVKSWAKLQKRTEMLLNKLIEKEVTTRSSLKEQWLKNENWLLEEYLEWVPESVHQQISLMWPPLEDHEKTIKMGRNKKY.

Residues 1 to 10 show a composition bias toward basic and acidic residues; that stretch reads MGKRKTKEDN. Disordered stretches follow at residues 1-51 and 101-163; these read MGKR…FAKE and STKL…DAGN. Residues 138–160 are compositionally biased toward acidic residues; that stretch reads PTDDESSSEEEEEEEEGDNDIED. A Helicase ATP-binding domain is found at 246-412; sequence VEAINENLVT…KLFPLLTPKV (167 aa). 259 to 266 provides a ligand contact to ATP; sequence GETGSGKT. Positions 355 to 358 match the DEAH box motif; it reads DEAH. The Helicase C-terminal domain maps to 463-703; that stretch reads EVKQLITKLK…QLVLHLKSMN (241 aa).

Belongs to the DEAD box helicase family. DEAH subfamily.

It catalyses the reaction ATP + H2O = ADP + phosphate + H(+). Its function is as follows. Probable ATP-binding RNA helicase. This is Putative ATP-dependent RNA helicase rha-2 (rha-2) from Caenorhabditis elegans.